The chain runs to 127 residues: Aspartate 1-decarboxylase (127 aa).

Serine 25 (schiff-base intermediate with substrate; via pyruvic acid) is an active-site residue. Position 25 is a pyruvic acid (Ser) (serine 25). Position 57 (threonine 57) interacts with substrate. Tyrosine 58 serves as the catalytic Proton donor. A substrate-binding site is contributed by 73 to 75 (GAA).

This sequence belongs to the PanD family. As to quaternary structure, heterooctamer of four alpha and four beta subunits. Requires pyruvate as cofactor. Is synthesized initially as an inactive proenzyme, which is activated by self-cleavage at a specific serine bond to produce a beta-subunit with a hydroxyl group at its C-terminus and an alpha-subunit with a pyruvoyl group at its N-terminus.

The protein localises to the cytoplasm. The enzyme catalyses L-aspartate + H(+) = beta-alanine + CO2. It functions in the pathway cofactor biosynthesis; (R)-pantothenate biosynthesis; beta-alanine from L-aspartate: step 1/1. Functionally, catalyzes the pyruvoyl-dependent decarboxylation of aspartate to produce beta-alanine. The polypeptide is Aspartate 1-decarboxylase (Clostridium botulinum (strain ATCC 19397 / Type A)).